A 447-amino-acid polypeptide reads, in one-letter code: UDP-N-acetylmuramoylalanine--D-glutamate ligase (447 aa).

130–136 contacts ATP; that stretch reads GTSGKTT.

The protein belongs to the MurCDEF family.

The protein localises to the cytoplasm. It catalyses the reaction UDP-N-acetyl-alpha-D-muramoyl-L-alanine + D-glutamate + ATP = UDP-N-acetyl-alpha-D-muramoyl-L-alanyl-D-glutamate + ADP + phosphate + H(+). It participates in cell wall biogenesis; peptidoglycan biosynthesis. Its function is as follows. Cell wall formation. Catalyzes the addition of glutamate to the nucleotide precursor UDP-N-acetylmuramoyl-L-alanine (UMA). The polypeptide is UDP-N-acetylmuramoylalanine--D-glutamate ligase (Oleidesulfovibrio alaskensis (strain ATCC BAA-1058 / DSM 17464 / G20) (Desulfovibrio alaskensis)).